Reading from the N-terminus, the 211-residue chain is Imidazole glycerol phosphate synthase subunit HisH (211 aa).

One can recognise a Glutamine amidotransferase type-1 domain in the interval Val3–Ala211. The Nucleophile role is filled by Cys81. Active-site residues include His186 and Glu188.

As to quaternary structure, heterodimer of HisH and HisF.

It is found in the cytoplasm. It catalyses the reaction 5-[(5-phospho-1-deoxy-D-ribulos-1-ylimino)methylamino]-1-(5-phospho-beta-D-ribosyl)imidazole-4-carboxamide + L-glutamine = D-erythro-1-(imidazol-4-yl)glycerol 3-phosphate + 5-amino-1-(5-phospho-beta-D-ribosyl)imidazole-4-carboxamide + L-glutamate + H(+). The enzyme catalyses L-glutamine + H2O = L-glutamate + NH4(+). It participates in amino-acid biosynthesis; L-histidine biosynthesis; L-histidine from 5-phospho-alpha-D-ribose 1-diphosphate: step 5/9. In terms of biological role, IGPS catalyzes the conversion of PRFAR and glutamine to IGP, AICAR and glutamate. The HisH subunit catalyzes the hydrolysis of glutamine to glutamate and ammonia as part of the synthesis of IGP and AICAR. The resulting ammonia molecule is channeled to the active site of HisF. In Trichormus variabilis (strain ATCC 29413 / PCC 7937) (Anabaena variabilis), this protein is Imidazole glycerol phosphate synthase subunit HisH.